The sequence spans 418 residues: Serine--tRNA ligase (418 aa).

226 to 228 contacts L-serine; that stretch reads TSE. ATP contacts are provided by residues 257–259 and valine 273; that span reads RRE. Glutamate 280 lines the L-serine pocket. 344–347 contacts ATP; the sequence is ELTS. Threonine 379 is a binding site for L-serine.

The protein belongs to the class-II aminoacyl-tRNA synthetase family. Type-1 seryl-tRNA synthetase subfamily. Homodimer. The tRNA molecule binds across the dimer.

The protein resides in the cytoplasm. It carries out the reaction tRNA(Ser) + L-serine + ATP = L-seryl-tRNA(Ser) + AMP + diphosphate + H(+). The catalysed reaction is tRNA(Sec) + L-serine + ATP = L-seryl-tRNA(Sec) + AMP + diphosphate + H(+). The protein operates within aminoacyl-tRNA biosynthesis; selenocysteinyl-tRNA(Sec) biosynthesis; L-seryl-tRNA(Sec) from L-serine and tRNA(Sec): step 1/1. In terms of biological role, catalyzes the attachment of serine to tRNA(Ser). Is also able to aminoacylate tRNA(Sec) with serine, to form the misacylated tRNA L-seryl-tRNA(Sec), which will be further converted into selenocysteinyl-tRNA(Sec). This is Serine--tRNA ligase from Mycobacteroides abscessus (strain ATCC 19977 / DSM 44196 / CCUG 20993 / CIP 104536 / JCM 13569 / NCTC 13031 / TMC 1543 / L948) (Mycobacterium abscessus).